Reading from the N-terminus, the 224-residue chain is Small ribosomal subunit protein uS3 (224 aa).

Positions 39–107 (IREFLKKKPS…DVWVEIAEVK (69 aa)) constitute a KH type-2 domain.

This sequence belongs to the universal ribosomal protein uS3 family. As to quaternary structure, part of the 30S ribosomal subunit. Forms a tight complex with proteins S10 and S14.

Binds the lower part of the 30S subunit head. Binds mRNA in the 70S ribosome, positioning it for translation. This is Small ribosomal subunit protein uS3 from Chlamydia trachomatis serovar L2 (strain ATCC VR-902B / DSM 19102 / 434/Bu).